The primary structure comprises 267 residues: 2-keto-3-deoxy-L-rhamnonate aldolase (267 aa).

The Proton acceptor role is filled by H49. Q151 is a binding site for substrate. E153 lines the Mg(2+) pocket. A178 and D179 together coordinate substrate. Residue D179 coordinates Mg(2+).

This sequence belongs to the HpcH/HpaI aldolase family. KDR aldolase subfamily. In terms of assembly, homohexamer. The cofactor is Mg(2+).

The catalysed reaction is 2-dehydro-3-deoxy-L-rhamnonate = (S)-lactaldehyde + pyruvate. Functionally, catalyzes the reversible retro-aldol cleavage of 2-keto-3-deoxy-L-rhamnonate (KDR) to pyruvate and lactaldehyde. This is 2-keto-3-deoxy-L-rhamnonate aldolase from Shigella dysenteriae serotype 1 (strain Sd197).